A 368-amino-acid polypeptide reads, in one-letter code: Interferon-stimulated 20 kDa exonuclease-like 2 (368 aa).

Disordered stretches follow at residues Phe-33 to Lys-107 and Pro-127 to Pro-187. A compositionally biased stretch (polar residues) spans Lys-42–Asn-54. Over residues Lys-77–Ala-96 the composition is skewed to basic and acidic residues. A compositionally biased stretch (basic residues) spans Ser-131–Lys-145. The Exonuclease domain occupies Met-194–Asn-368.

It localises to the nucleus. It is found in the nucleolus. Its function is as follows. 3'-&gt; 5'-exoribonuclease involved in ribosome biogenesis in the processing of the 12S pre-rRNA. Displays a strong specificity for a 3'-end containing a free hydroxyl group. This Mus musculus (Mouse) protein is Interferon-stimulated 20 kDa exonuclease-like 2 (Isg20l2).